We begin with the raw amino-acid sequence, 224 residues long: MKLSFTKVSLTNILILFNCLFIIFSMIVLTFGVIPQIYLLKFANILHGVRPSIFPIVCFTGSFVIIVACVGIIGLMKGGKCLLTMHIIALIIATIIDISTATLSAIKQNEFLTKAGQVLNDSSKLYYKNRLYATEFDLMHITFKCCNVKNDYSLLGTLHLIPESCTHGIEFYKQQCNEPLNKYVRYYIDILIYLCFIFGFIKLIYSLFTFTQRQRIFSEKTPVA.

Over 1–12 (MKLSFTKVSLTN) the chain is Cytoplasmic. A helical transmembrane segment spans residues 13–33 (ILILFNCLFIIFSMIVLTFGV). Residues 34–52 (IPQIYLLKFANILHGVRPS) lie on the Extracellular side of the membrane. Residues 53–73 (IFPIVCFTGSFVIIVACVGII) form a helical membrane-spanning segment. Topologically, residues 74 to 80 (GLMKGGK) are cytoplasmic. A helical transmembrane segment spans residues 81–101 (CLLTMHIIALIIATIIDISTA). Residues 102-189 (TLSAIKQNEF…LNKYVRYYID (88 aa)) are Extracellular-facing. Residue asparagine 120 is glycosylated (N-linked (GlcNAc...) asparagine). Residues 190-210 (ILIYLCFIFGFIKLIYSLFTF) traverse the membrane as a helical segment. Topologically, residues 211-224 (TQRQRIFSEKTPVA) are cytoplasmic.

It belongs to the tetraspanin (TM4SF) family.

It is found in the membrane. The protein is 25 kDa integral membrane protein of Schistosoma japonicum (Blood fluke).